The primary structure comprises 100 residues: Urease subunit gamma (100 aa).

Belongs to the urease gamma subunit family. Heterotrimer of UreA (gamma), UreB (beta) and UreC (alpha) subunits. Three heterotrimers associate to form the active enzyme.

It is found in the cytoplasm. The enzyme catalyses urea + 2 H2O + H(+) = hydrogencarbonate + 2 NH4(+). The protein operates within nitrogen metabolism; urea degradation; CO(2) and NH(3) from urea (urease route): step 1/1. The chain is Urease subunit gamma from Polynucleobacter asymbioticus (strain DSM 18221 / CIP 109841 / QLW-P1DMWA-1) (Polynucleobacter necessarius subsp. asymbioticus).